The chain runs to 402 residues: Meiosis-specific cyclin rem1 (402 aa).

It belongs to the cyclin family. Cyclin AB subfamily.

Functionally, required for pre-meiotic DNA synthesis and S phase progression. Regulates levels of meiotic intragenic recombination. The sequence is that of Meiosis-specific cyclin rem1 (rem1) from Schizosaccharomyces pombe (strain 972 / ATCC 24843) (Fission yeast).